Here is a 59-residue protein sequence, read N- to C-terminus: Alpha-conotoxin CIA (59 aa).

Positions 1–16 (MFTVFLLVVLTITVVS) are cleaved as a signal peptide. The propeptide occupies 17–42 (FPSDRASDGRDDEAKDERSDMYKSKR). Cystine bridges form between Cys46–Cys51 and Cys47–Cys57. At Cys57 the chain carries Cysteine amide.

It belongs to the conotoxin A superfamily. Expressed by the venom duct.

The protein resides in the secreted. Its function is as follows. Alpha-conotoxins act on postsynaptic membranes, they bind to the nicotinic acetylcholine receptors (nAChR) and thus inhibit them. This toxin blocks the rat muscle nAChRs alpha-1-beta-1-gamma-delta (CHRNA1-CHRNB1-CHRNG-CHRND) (IC(50)=5.7 nM) and the rat neuronal nAChR alpha-3-beta-2/CHRNA3-CHRNB2 (IC(50)=2060 nM). In vivo, intramuscular injection into zebrafish produces rapid flaccid paralysis. This Conus catus (Cat cone) protein is Alpha-conotoxin CIA.